Consider the following 90-residue polypeptide: Protein S100-A6 (90 aa).

EF-hand domains follow at residues 12–47 and 48–83; these read LVAI…IGAK and LQDA…LAMI. Ca(2+) is bound by residues threonine 28 and glutamate 33. At lysine 40 the chain carries N6-acetyllysine. Lysine 47 is modified (N6-acetyllysine; alternate). N6-succinyllysine; alternate is present on lysine 47. Ca(2+) is bound by residues aspartate 61, asparagine 63, aspartate 65, and glutamate 72.

This sequence belongs to the S-100 family. Homodimer; head to tail assembly of 2 subunits. Interacts with CACYBP in a calcium-dependent manner. Interacts with ANXA2 and ANXA11 (via N-terminus). Interacts with SUGT1. Interacts with TP53; has higher affinity for TP53 that is phosphorylated on its N-terminal domain, and lower affinity for TP53 that is phosphorylated on its C-terminal domain. Interacts with tropomyosin. Interacts with FKBP4. Interacts with PPP5C (via TPR repeats); the interaction is calcium-dependent and modulates PPP5C activity. Interacts with TPPP; this interaction inhibits TPPP dimerization.

The protein resides in the nucleus envelope. The protein localises to the cytoplasm. Its subcellular location is the cell membrane. In terms of biological role, may function as calcium sensor and modulator, contributing to cellular calcium signaling. May function by interacting with other proteins, such as TPR-containing proteins, and indirectly play a role in many physiological processes such as the reorganization of the actin cytoskeleton and in cell motility. Binds 2 calcium ions. Calcium binding is cooperative. This Sus scrofa (Pig) protein is Protein S100-A6 (S100A6).